The primary structure comprises 745 residues: Cytoskeleton-associated protein 2-like (745 aa).

The tract at residues 25–141 is disordered; that stretch reads AKGKLKSQNT…GELSRKPVGS (117 aa). Residues 30–61 are compositionally biased toward polar residues; that stretch reads KSQNTKPYLKSKNNCQNQPPSKSTIRPKNDVT. Low complexity predominate over residues 109-120; it reads SSNPYSKPSSKS. Polar residues predominate over residues 121 to 133; the sequence is FQQCEAGSSTTGE. The KEN box signature appears at 185-187; the sequence is KEN. A compositionally biased stretch (basic and acidic residues) spans 192–203; that stretch reads LTEPERKPDPKL. Disordered stretches follow at residues 192-217, 256-276, and 385-411; these read LTEPERKPDPKLYTRSKPKTDSYNQT, VKSQQLSRGADLARPGVKPSR, and RFNSAIPSTPSIRPNGTSGNKHNNNGF. Lysine 198 participates in a covalent cross-link: Glycyl lysine isopeptide (Lys-Gly) (interchain with G-Cter in SUMO1); alternate. Lysine 198 participates in a covalent cross-link: Glycyl lysine isopeptide (Lys-Gly) (interchain with G-Cter in SUMO2); alternate. Residue tyrosine 204 is modified to Phosphotyrosine. Over residues 389–411 the composition is skewed to polar residues; that stretch reads AIPSTPSIRPNGTSGNKHNNNGF. Phosphothreonine is present on threonine 742. Serine 745 is modified (phosphoserine).

Belongs to the CKAP2 family. In terms of processing, ubiquitinated by the anaphase promoting complex/cyclosome (APC/C).

It is found in the cytoplasm. Its subcellular location is the cytoskeleton. The protein resides in the spindle pole. Microtubule-associated protein required for mitotic spindle formation and cell-cycle progression in neural progenitor cells. The protein is Cytoskeleton-associated protein 2-like (CKAP2L) of Homo sapiens (Human).